Here is a 174-residue protein sequence, read N- to C-terminus: MINVLAVAGLPGSGKTTVARIIERRGYLYYSLGDVVRAEAERRGLTPDKTAVTMRLERGRKAVIYELLKSVKPGEKVVIDGIRSIEEVEALEEFLGTVFLIYVVASRKVRYQRLTGRGRSDDPLSFSQFLLRDLRELRFGLADLLSRADYIIVNETKSIEELEQEIGKVLLELR.

9–16 contacts ATP; sequence GLPGSGKT.

It belongs to the UPF0200 family.

The polypeptide is UPF0200 protein PAE1629 (Pyrobaculum aerophilum (strain ATCC 51768 / DSM 7523 / JCM 9630 / CIP 104966 / NBRC 100827 / IM2)).